A 195-amino-acid chain; its full sequence is Probable GTP-binding protein EngB (195 aa).

Positions 24–195 (GLKEVALAGR…MIFNAIEKYL (172 aa)) constitute an EngB-type G domain. Residues 32–39 (GRSNVGKS), 59–63 (GKTQT), 77–80 (DVPG), 144–147 (TKED), and 176–178 (YTA) each bind GTP. Residues serine 39 and threonine 61 each contribute to the Mg(2+) site.

Belongs to the TRAFAC class TrmE-Era-EngA-EngB-Septin-like GTPase superfamily. EngB GTPase family. Mg(2+) serves as cofactor.

Functionally, necessary for normal cell division and for the maintenance of normal septation. This is Probable GTP-binding protein EngB from Macrococcus caseolyticus (strain JCSC5402) (Macrococcoides caseolyticum).